The chain runs to 229 residues: MKKITIAIDGFSSCGKSTMAKDLAREVGYIYIDSGAMYRAVTLYSIENGIFNGDVIDTEKLKEAIRDIRITFRPNPETGRPDTYLNGVNVENKIRTMGVSSKVSPISALDFVREAMVAQQQAMGKEKGIVMDGRDIGTTVFPDAELKIFVTATPEIRAQRRFDELKAKGQEGSFEEILENVKQRDYIDQHREVSPLRKADDALLLDNSNLSIEQQKEWLSEQFGKVVKE.

10–18 (GFSSCGKST) serves as a coordination point for ATP.

This sequence belongs to the cytidylate kinase family. Type 1 subfamily.

Its subcellular location is the cytoplasm. The catalysed reaction is CMP + ATP = CDP + ADP. It carries out the reaction dCMP + ATP = dCDP + ADP. This is Cytidylate kinase from Bacteroides thetaiotaomicron (strain ATCC 29148 / DSM 2079 / JCM 5827 / CCUG 10774 / NCTC 10582 / VPI-5482 / E50).